The sequence spans 457 residues: MPAMVLLLCLALGPALRSARCESTEEYDYDYLSINKTWVLTPKAQETDATQILNSLLKNYDNKLRPDIGIKPTFIDVDIYVNSIGPVSVIQMEYTIDIFFAQTWYDRRLRFNSTLKALTLNTNMVSRIWIPDTFFRNSKRADSHWITTPNQLLRIWNDGKVLYTLRLTIEAECLLQLQNFPMDTHSCPLVFSSYGYPREEIVYRWRRYSIEVSDQRTWRLYQFDFTGLRNTSEVLRTGAGEYMVMTVSFDLSRRMGYFAIQTYIPCILTVVLSWVSFWIKRDSTPARTSLGITTVLTMTTLSTISRKHLPRVSYITAMDLFVSVCFIFVFAALMEYATLNYLVGNKKPLEHSSRKARLPPAGAQVMPSFTAINININNIMHWPPEIEEDEDDDPGSPCLEGKECERFFCCIEDCQTGMWREGRVRIHISRLDSYSRVFFPTAFLLFNIVYWIAYLYL.

Positions 1-21 are cleaved as a signal peptide; it reads MPAMVLLLCLALGPALRSARC. At 22 to 256 the chain is on the extracellular side; the sequence is ESTEEYDYDY…VSFDLSRRMG (235 aa). N-linked (GlcNAc...) asparagine glycans are attached at residues Asn35 and Asn112. Cys173 and Cys187 form a disulfide bridge. An N-linked (GlcNAc...) asparagine glycan is attached at Asn230. 3 helical membrane-spanning segments follow: residues 257-279, 283-305, and 317-339; these read YFAIQTYIPCILTVVLSWVSFWI, STPARTSLGITTVLTMTTLSTIS, and AMDLFVSVCFIFVFAALMEYATL. The Cytoplasmic portion of the chain corresponds to 340–433; sequence NYLVGNKKPL…VRIHISRLDS (94 aa). The chain crosses the membrane as a helical span at residues 434–457; sequence YSRVFFPTAFLLFNIVYWIAYLYL.

This sequence belongs to the ligand-gated ion channel (TC 1.A.9) family. Gamma-aminobutyric acid receptor (TC 1.A.9.5) subfamily. GABRG4 sub-subfamily. As to quaternary structure, generally pentameric. There are five types of GABA(A) receptor chains: alpha, beta, gamma, delta, and rho. Abundant in several brain regions, including the ectostriatum, nucleus rotundus and hyperstriatum ventrale.

It is found in the postsynaptic cell membrane. Its subcellular location is the cell membrane. Functionally, GABA, the major inhibitory neurotransmitter in the vertebrate brain, mediates neuronal inhibition by binding to the GABA/benzodiazepine receptor and opening an integral chloride channel. The chain is Gamma-aminobutyric acid receptor subunit gamma-4 (GABRG4) from Gallus gallus (Chicken).